The primary structure comprises 274 residues: Bis(5'-nucleosyl)-tetraphosphatase, symmetrical (274 aa).

It belongs to the Ap4A hydrolase family.

It catalyses the reaction P(1),P(4)-bis(5'-adenosyl) tetraphosphate + H2O = 2 ADP + 2 H(+). In terms of biological role, hydrolyzes diadenosine 5',5'''-P1,P4-tetraphosphate to yield ADP. In Shewanella baltica (strain OS155 / ATCC BAA-1091), this protein is Bis(5'-nucleosyl)-tetraphosphatase, symmetrical.